The sequence spans 321 residues: PI-PLC X domain-containing protein 3 (321 aa).

In terms of domain architecture, PI-PLC X-box spans 22 to 197 (SIHSIPLTNL…DYQVLVFYHS (176 aa)). Residues His37 and His114 contribute to the active site.

This chain is PI-PLC X domain-containing protein 3 (PLCXD3), found in Bos taurus (Bovine).